The primary structure comprises 343 residues: Probable dual-specificity RNA methyltransferase RlmN (343 aa).

The Proton acceptor role is filled by E90. The region spanning 96–325 (HEGYATACIS…AEIRYEKGAD (230 aa)) is the Radical SAM core domain. The cysteines at positions 103 and 330 are disulfide-linked. Residues C110, C114, and C117 each coordinate [4Fe-4S] cluster. S-adenosyl-L-methionine is bound by residues 157–158 (GE), S189, 212–214 (SLH), and N288. The S-methylcysteine intermediate role is filled by C330.

The protein belongs to the radical SAM superfamily. RlmN family. [4Fe-4S] cluster serves as cofactor.

The protein localises to the cytoplasm. The catalysed reaction is adenosine(2503) in 23S rRNA + 2 reduced [2Fe-2S]-[ferredoxin] + 2 S-adenosyl-L-methionine = 2-methyladenosine(2503) in 23S rRNA + 5'-deoxyadenosine + L-methionine + 2 oxidized [2Fe-2S]-[ferredoxin] + S-adenosyl-L-homocysteine. It carries out the reaction adenosine(37) in tRNA + 2 reduced [2Fe-2S]-[ferredoxin] + 2 S-adenosyl-L-methionine = 2-methyladenosine(37) in tRNA + 5'-deoxyadenosine + L-methionine + 2 oxidized [2Fe-2S]-[ferredoxin] + S-adenosyl-L-homocysteine. In terms of biological role, specifically methylates position 2 of adenine 2503 in 23S rRNA and position 2 of adenine 37 in tRNAs. This Pseudothermotoga lettingae (strain ATCC BAA-301 / DSM 14385 / NBRC 107922 / TMO) (Thermotoga lettingae) protein is Probable dual-specificity RNA methyltransferase RlmN.